The primary structure comprises 270 residues: Centromere protein Q (270 aa).

A disordered region spans residues 1-59 (MSGKANTSKKKSQRVKRNVKQRADKEDEELDSPENKVGNRAKRNRSHAGHLSSKEQTKC). 2 stretches are compositionally biased toward basic residues: residues 7–20 (TSKK…RNVK) and 39–48 (NRAKRNRSHA). Residue serine 52 is modified to Phosphoserine. Positions 143–205 (LKVEREQERA…EEEMKEVFHI (63 aa)) form a coiled coil.

The protein belongs to the CENP-Q/OKP1 family. As to quaternary structure, component of the CENPA-CAD complex, composed of CENPI, CENPK, CENPL, CENPO, CENPP, CENPQ, CENPR and CENPS. The CENPA-CAD complex interacts with the CENPA-NAC complex, at least composed of CENPA, CENPC, CENPH, CENPM, CENPN, CENPT and CENPU. In terms of processing, phosphorylation at Ser-52 is essential for CENPE recruitment to kinetochores and orderly chromosome congression.

The protein localises to the nucleus. It is found in the chromosome. Its subcellular location is the centromere. Functionally, component of the CENPA-CAD (nucleosome distal) complex, a complex recruited to centromeres which is involved in assembly of kinetochore proteins, mitotic progression and chromosome segregation. May be involved in incorporation of newly synthesized CENPA into centromeres via its interaction with the CENPA-NAC complex. Plays an important role in chromosome congression and in the recruitment of CENP-O complex (which comprises CENPO, CENPP, CENPQ and CENPU), CENPE and PLK1 to the kinetochores. The polypeptide is Centromere protein Q (Cenpq) (Rattus norvegicus (Rat)).